A 577-amino-acid chain; its full sequence is Arginine--tRNA ligase (577 aa).

The 'HIGH' region motif lies at 123–133 (PNVAKEMHVGH).

This sequence belongs to the class-I aminoacyl-tRNA synthetase family. As to quaternary structure, monomer.

It is found in the cytoplasm. It carries out the reaction tRNA(Arg) + L-arginine + ATP = L-arginyl-tRNA(Arg) + AMP + diphosphate. This chain is Arginine--tRNA ligase, found in Cronobacter sakazakii (strain ATCC BAA-894) (Enterobacter sakazakii).